We begin with the raw amino-acid sequence, 92 residues long: Long neurotoxin 73 (92 aa).

The signal sequence occupies residues 1 to 21 (MKTLLLTLVVVTIVCLDLGDS). Intrachain disulfides connect Cys-24–Cys-41, Cys-34–Cys-62, Cys-47–Cys-51, Cys-66–Cys-77, and Cys-78–Cys-83.

Belongs to the three-finger toxin family. Long-chain subfamily. Type II alpha-neurotoxin sub-subfamily. Expressed by the venom gland.

The protein resides in the secreted. Binds with high affinity to muscular (alpha-1/CHRNA1) and neuronal (alpha-7/CHRNA7) nicotinic acetylcholine receptor (nAChR) and inhibits acetylcholine from binding to the receptor, thereby impairing neuromuscular and neuronal transmission. The polypeptide is Long neurotoxin 73 (Drysdalia coronoides (White-lipped snake)).